The primary structure comprises 398 residues: Growth-regulating factor 3 (398 aa).

The span at 1-17 (MDLQLKQWRSQQQQQHQ) shows a compositional bias: low complexity. The segment at 1–32 (MDLQLKQWRSQQQQQHQTESEEQPSAAKIPKH) is disordered. One can recognise a QLQ domain in the interval 76 to 111 (FFSWAQWQELELQALIYRYMLAGAAVPQELLLPIKK). The 45-residue stretch at 144–188 (DPEPGRCRRTDGKKWRCSRDVFAGHKYCERHMHRGRNRSRKPVET) folds into the WRC domain. 2 consecutive short sequence motifs (bipartite nuclear localization signal) follow at residues 149-159 (RCRRTDGKKWR) and 177-184 (RGRNRSRK). Composition is skewed to polar residues over residues 299-350 (SLQE…RDQQ) and 383-398 (PTSV…QAFH). The interval 299-398 (SLQEADNSSS…QLGVSTQAFH (100 aa)) is disordered.

It belongs to the GRF family. In terms of tissue distribution, strongly expressed in actively growing and developing tissues, such as roots, upper stems, and shoot tips containing the shoot apical meristem (SAM) and flower buds. Also expressed in mature flowers, but weakly expressed in mature stems and leaves.

The protein resides in the nucleus. Transcription activator that plays a role in the regulation of cell expansion in leaf and cotyledons tissues. Component of a network formed by miR396, the GRFs and their interacting factors (GIFs) acting in the regulation of meristem function, at least partially through the control of cell proliferation. microRNA396-GRF1/GRF3 regulatory module acts as a developmental regulator in the reprogramming of root cells during cyst nematode infection, leading to the formation of the syncytium. This Arabidopsis thaliana (Mouse-ear cress) protein is Growth-regulating factor 3 (GRF3).